A 303-amino-acid polypeptide reads, in one-letter code: Probable cell division protein WhiA (303 aa).

Residues 272-303 (SLQQIADSLDFAITKSGVNHRLRKINKLAEDL) constitute a DNA-binding region (H-T-H motif).

Belongs to the WhiA family.

Involved in cell division and chromosome segregation. The polypeptide is Probable cell division protein WhiA (Streptococcus equi subsp. zooepidemicus (strain MGCS10565)).